The sequence spans 78 residues: Small ribosomal subunit protein bS18 (78 aa).

Belongs to the bacterial ribosomal protein bS18 family. As to quaternary structure, part of the 30S ribosomal subunit. Forms a tight heterodimer with protein bS6.

Binds as a heterodimer with protein bS6 to the central domain of the 16S rRNA, where it helps stabilize the platform of the 30S subunit. The sequence is that of Small ribosomal subunit protein bS18 from Kocuria rhizophila (strain ATCC 9341 / DSM 348 / NBRC 103217 / DC2201).